The primary structure comprises 398 residues: MDTQAFRRSLHHSDRYNRRGFDSPTKRAQALEEAYQSDLISSIRDNGFTYTKGRLNIKLAQAFGFCWGVERAVAMAYETRRHYPNENIWITNEIIHNPSVNDHLRKMNVKFISAKNGIKDFSLVSNGDVVILPAFGATVQEMKLLHEKGCHIIDTTCPWVSKVWHTVEKHKKHVFTSIIHGKFKHEETLATSSFAGKYLVVLDLEEANYVSEYILGKGNRNEFMNKFSKAFSNGFDPDKDLDRVGVANQTTMLKSETEEIGKVFERTMLKKFGPENLNSHFLAFNTICDATEERQDAMFSLVDEDLDILVVIGGFNSSNTTHLQEIAITKNISSFHIDTPERISVKENSIFHKPLGSELELKKNFLPSGKINVGITSGASTPDKVVADVIEKLIDIAS.

Cys66 provides a ligand contact to [4Fe-4S] cluster. His96 is a (2E)-4-hydroxy-3-methylbut-2-enyl diphosphate binding site. His96 contributes to the dimethylallyl diphosphate binding site. His96 contributes to the isopentenyl diphosphate binding site. Cys157 provides a ligand contact to [4Fe-4S] cluster. Residue His185 participates in (2E)-4-hydroxy-3-methylbut-2-enyl diphosphate binding. His185 is a binding site for dimethylallyl diphosphate. His185 contacts isopentenyl diphosphate. The active-site Proton donor is the Glu187. Thr250 is a (2E)-4-hydroxy-3-methylbut-2-enyl diphosphate binding site. [4Fe-4S] cluster is bound at residue Cys288. Residues Ser317, Ser318, Asn319, and Ser380 each contribute to the (2E)-4-hydroxy-3-methylbut-2-enyl diphosphate site. Residues Ser317, Ser318, Asn319, and Ser380 each coordinate dimethylallyl diphosphate. Residues Ser317, Ser318, Asn319, and Ser380 each contribute to the isopentenyl diphosphate site.

This sequence belongs to the IspH family. The cofactor is [4Fe-4S] cluster.

The catalysed reaction is isopentenyl diphosphate + 2 oxidized [2Fe-2S]-[ferredoxin] + H2O = (2E)-4-hydroxy-3-methylbut-2-enyl diphosphate + 2 reduced [2Fe-2S]-[ferredoxin] + 2 H(+). The enzyme catalyses dimethylallyl diphosphate + 2 oxidized [2Fe-2S]-[ferredoxin] + H2O = (2E)-4-hydroxy-3-methylbut-2-enyl diphosphate + 2 reduced [2Fe-2S]-[ferredoxin] + 2 H(+). Its pathway is isoprenoid biosynthesis; dimethylallyl diphosphate biosynthesis; dimethylallyl diphosphate from (2E)-4-hydroxy-3-methylbutenyl diphosphate: step 1/1. It functions in the pathway isoprenoid biosynthesis; isopentenyl diphosphate biosynthesis via DXP pathway; isopentenyl diphosphate from 1-deoxy-D-xylulose 5-phosphate: step 6/6. Catalyzes the conversion of 1-hydroxy-2-methyl-2-(E)-butenyl 4-diphosphate (HMBPP) into a mixture of isopentenyl diphosphate (IPP) and dimethylallyl diphosphate (DMAPP). Acts in the terminal step of the DOXP/MEP pathway for isoprenoid precursor biosynthesis. In Prochlorococcus marinus (strain AS9601), this protein is 4-hydroxy-3-methylbut-2-enyl diphosphate reductase.